We begin with the raw amino-acid sequence, 149 residues long: MSKLQRHIKIRELITENIIETQDELVDSLKALDFNVTQATVSRDIKELQLVKVPTTTGQYKYSLPADQRFNPLQKLKRLIVDTFVKIEHASHFIILHTLPGNAHAVGVLIDNLDWEEIMGTICGDDTCLIICRTPEQAEMIKNRFIEML.

This sequence belongs to the ArgR family.

It is found in the cytoplasm. It functions in the pathway amino-acid biosynthesis; L-arginine biosynthesis [regulation]. Regulates arginine biosynthesis genes. The polypeptide is Arginine repressor (Oceanobacillus iheyensis (strain DSM 14371 / CIP 107618 / JCM 11309 / KCTC 3954 / HTE831)).